The following is a 218-amino-acid chain: MGTRDDEYDYLFKVVLIGDSGVGKSNLLSRFTRNEFNLESKSTIGVEFATRSIQVDGKTIKAQIWDTAGQERYRAITSAYYRGAVGALLVYDIAKHLTYENVERWLKELRDHADNNIVIMLVGNKSDLRHLRAVPTDEARAFAEKNNLSFIETSALDSTNVEEAFKNILTEIYRIVSQKQISDRSAHDESPGNNVVDISVPPTTDGQKSNKLQCCQNM.

Gly2 carries the N-acetylglycine modification. Residues Ser20, Gly21, Gly23, Lys24, Ser25, Asn26, Asn37, Leu38, Ser40, Ser42, and Thr43 each contribute to the GTP site. Ser25 is a binding site for Mg(2+). Positions 36–47 (FNLESKSTIGVE) match the Switch 1 motif. Mg(2+)-binding residues include Thr43 and Asp66. The short motif at 67–86 (TAGQERYRAITSAYYRGAVG) is the Switch 2 element. The GTP site is built by Gly69, Asn124, Lys125, Asp127, Ala155, and Leu156. Residues 183–218 (DRSAHDESPGNNVVDISVPPTTDGQKSNKLQCCQNM) form a disordered region. The span at 201–218 (PPTTDGQKSNKLQCCQNM) shows a compositional bias: polar residues. S-geranylgeranyl cysteine attachment occurs at residues Cys214 and Cys215. Position 215 is a cysteine methyl ester (Cys215). A propeptide spans 216-218 (QNM) (removed in mature form).

It belongs to the small GTPase superfamily. Rab family. Requires Mg(2+) as cofactor.

The protein resides in the recycling endosome membrane. It localises to the cytoplasmic vesicle. The protein localises to the secretory vesicle. It is found in the synaptic vesicle membrane. Its subcellular location is the phagosome membrane. The catalysed reaction is GTP + H2O = GDP + phosphate + H(+). Its activity is regulated as follows. Regulated by guanine nucleotide exchange factors (GEFs) which promote the exchange of bound GDP for free GTP. Regulated by GTPase activating proteins (GAPs) which increase the GTP hydrolysis activity. Inhibited by GDP dissociation inhibitors (GDIs) which prevent Rab-GDP dissociation. Functionally, the small GTPases Rab are key regulators of intracellular membrane trafficking, from the formation of transport vesicles to their fusion with membranes. Rabs cycle between an inactive GDP-bound form and an active GTP-bound form that is able to recruit to membranes different set of downstream effectors directly responsible for vesicle formation, movement, tethering and fusion. That Rab plays a role in endocytic recycling, regulating apical recycling of several transmembrane proteins including cystic fibrosis transmembrane conductance regulator/CFTR, epithelial sodium channel/ENaC, potassium voltage-gated channel, and voltage-dependent L-type calcium channel. May also regulate constitutive and regulated secretion, like insulin granule exocytosis. Required for melanosome transport and release from melanocytes. Also regulates V-ATPase intracellular transport in response to extracellular acidosis. This Diplobatis ommata (Ocellated electric ray) protein is Ras-related protein Rab-11B.